The following is a 397-amino-acid chain: CCA-adding enzyme (397 aa).

The ATP site is built by Gly-26 and Arg-29. Residues Gly-26 and Arg-29 each coordinate CTP. The Mg(2+) site is built by Asp-39 and Asp-41. Residues Arg-110, Asp-153, Arg-156, Arg-159, and Arg-162 each coordinate ATP. Residues Arg-110, Asp-153, Arg-156, Arg-159, and Arg-162 each coordinate CTP.

The protein belongs to the tRNA nucleotidyltransferase/poly(A) polymerase family. Bacterial CCA-adding enzyme type 3 subfamily. Homodimer. Mg(2+) is required as a cofactor.

The catalysed reaction is a tRNA precursor + 2 CTP + ATP = a tRNA with a 3' CCA end + 3 diphosphate. It carries out the reaction a tRNA with a 3' CCA end + 2 CTP + ATP = a tRNA with a 3' CCACCA end + 3 diphosphate. Catalyzes the addition and repair of the essential 3'-terminal CCA sequence in tRNAs without using a nucleic acid template. Adds these three nucleotides in the order of C, C, and A to the tRNA nucleotide-73, using CTP and ATP as substrates and producing inorganic pyrophosphate. tRNA 3'-terminal CCA addition is required both for tRNA processing and repair. Also involved in tRNA surveillance by mediating tandem CCA addition to generate a CCACCA at the 3' terminus of unstable tRNAs. While stable tRNAs receive only 3'-terminal CCA, unstable tRNAs are marked with CCACCA and rapidly degraded. This is CCA-adding enzyme from Bacillus cereus (strain G9842).